A 213-amino-acid chain; its full sequence is FMN-dependent NADH:quinone oxidoreductase 3 (213 aa).

Residues S10, S16 to S18, and M96 to F99 each bind FMN.

It belongs to the azoreductase type 1 family. In terms of assembly, homodimer. The cofactor is FMN.

The enzyme catalyses 2 a quinone + NADH + H(+) = 2 a 1,4-benzosemiquinone + NAD(+). It catalyses the reaction N,N-dimethyl-1,4-phenylenediamine + anthranilate + 2 NAD(+) = 2-(4-dimethylaminophenyl)diazenylbenzoate + 2 NADH + 2 H(+). Its function is as follows. Quinone reductase that provides resistance to thiol-specific stress caused by electrophilic quinones. Shows a preference for naphthoquinones such as plumbagin. In terms of biological role, also exhibits azoreductase activity. Catalyzes the reductive cleavage of the azo bond in aromatic azo compounds to the corresponding amines. Preferred substrates are methyl red, amaranth and p-aminoazobenzene sulfonamide (PAABSA). This chain is FMN-dependent NADH:quinone oxidoreductase 3, found in Pseudomonas aeruginosa (strain ATCC 15692 / DSM 22644 / CIP 104116 / JCM 14847 / LMG 12228 / 1C / PRS 101 / PAO1).